The following is a 78-amino-acid chain: Translational regulator CsrA (78 aa).

Belongs to the CsrA/RsmA family. As to quaternary structure, homodimer; the beta-strands of each monomer intercalate to form a hydrophobic core, while the alpha-helices form wings that extend away from the core.

The protein resides in the cytoplasm. Functionally, a translational regulator that binds mRNA to regulate translation initiation and/or mRNA stability. Usually binds in the 5'-UTR at or near the Shine-Dalgarno sequence preventing ribosome-binding, thus repressing translation. Its main target seems to be the major flagellin gene, while its function is anatagonized by FliW. This Oleidesulfovibrio alaskensis (strain ATCC BAA-1058 / DSM 17464 / G20) (Desulfovibrio alaskensis) protein is Translational regulator CsrA.